Consider the following 312-residue polypeptide: 4-diphosphocytidyl-2-C-methyl-D-erythritol kinase (312 aa).

The active site involves Lys-16. 101-111 (PIGAGLAGGSS) contacts ATP. Residue Asp-143 is part of the active site.

This sequence belongs to the GHMP kinase family. IspE subfamily.

It carries out the reaction 4-CDP-2-C-methyl-D-erythritol + ATP = 4-CDP-2-C-methyl-D-erythritol 2-phosphate + ADP + H(+). The protein operates within isoprenoid biosynthesis; isopentenyl diphosphate biosynthesis via DXP pathway; isopentenyl diphosphate from 1-deoxy-D-xylulose 5-phosphate: step 3/6. In terms of biological role, catalyzes the phosphorylation of the position 2 hydroxy group of 4-diphosphocytidyl-2C-methyl-D-erythritol. This is 4-diphosphocytidyl-2-C-methyl-D-erythritol kinase from Prochlorococcus marinus subsp. pastoris (strain CCMP1986 / NIES-2087 / MED4).